The sequence spans 246 residues: Large ribosomal subunit protein uL3 (246 aa).

Residues 140 to 162 (SHRSIGSTGGRQDPGKTFKNKKM) are disordered. Residue glutamine 151 is modified to N5-methylglutamine.

The protein belongs to the universal ribosomal protein uL3 family. As to quaternary structure, part of the 50S ribosomal subunit. Forms a cluster with proteins L14 and L19. In terms of processing, methylated by PrmB.

Its function is as follows. One of the primary rRNA binding proteins, it binds directly near the 3'-end of the 23S rRNA, where it nucleates assembly of the 50S subunit. The polypeptide is Large ribosomal subunit protein uL3 (Methylobacterium sp. (strain 4-46)).